Reading from the N-terminus, the 229-residue chain is Guanylate kinase (229 aa).

Residues 7–42 (RVLQKCAYREEFKGDMERSTAATSKLPLEVELSRNS) enclose the RPE1 insert domain. Residues 44-222 (GLIIILSSPS…TLKKIHAIIV (179 aa)) form the Guanylate kinase-like domain. Residue 51 to 58 (SPSGTGKS) coordinates ATP.

The protein belongs to the guanylate kinase family.

The protein localises to the cytoplasm. It catalyses the reaction GMP + ATP = GDP + ADP. Its function is as follows. Essential for recycling GMP and indirectly, cGMP. The sequence is that of Guanylate kinase (gmk) from Rickettsia conorii (strain ATCC VR-613 / Malish 7).